The chain runs to 743 residues: 1,4-alpha-glucan branching enzyme GlgB (743 aa).

Asp-416 acts as the Nucleophile in catalysis. The Proton donor role is filled by Glu-469.

This sequence belongs to the glycosyl hydrolase 13 family. GlgB subfamily. In terms of assembly, monomer.

It carries out the reaction Transfers a segment of a (1-&gt;4)-alpha-D-glucan chain to a primary hydroxy group in a similar glucan chain.. It participates in glycan biosynthesis; glycogen biosynthesis. Its function is as follows. Catalyzes the formation of the alpha-1,6-glucosidic linkages in glycogen by scission of a 1,4-alpha-linked oligosaccharide from growing alpha-1,4-glucan chains and the subsequent attachment of the oligosaccharide to the alpha-1,6 position. This chain is 1,4-alpha-glucan branching enzyme GlgB, found in Shewanella baltica (strain OS223).